Reading from the N-terminus, the 557-residue chain is Neurofilament light polypeptide (557 aa).

The residue at position 2 (serine 2) is an N-acetylserine. The head stretch occupies residues 2–89 (SSYSYDPYYT…KIVRTQEKAQ (88 aa)). An IF rod domain is found at 86-396 (EKAQLQDLND…KLLEGEETRL (311 aa)). The tract at residues 90-121 (LQDLNDRFANFIERVHELEQRNKVLEAELLLL) is coil 1A. The linker 1 stretch occupies residues 122 to 134 (RQKHNEPSRLRDL). Residues 135 to 230 (YEQEVRELRL…KVHEEELAQL (96 aa)) form a coil 1B region. Positions 231–248 (QSQVQYAQISLEVEVAKP) are linker 12. Residues 249-267 (DLSSALRDIRAQYEKLAAK) form a coil 2A region. The segment at 268-276 (NMQSAEDWF) is linker 2. Residues 277-392 (KSRFTVLTQS…AAYRKLLEGE (116 aa)) are coil 2B. Positions 393–437 (ETRLSFSGVGAITSGYTQSAPVFGRSAYSLQSSSYMTSRAFPTYY) are tail, subdomain A. The tail stretch occupies residues 393-557 (ETRLSFSGVG…KKKKKKKKKK (165 aa)). The tail, subdomain B (acidic) stretch occupies residues 438–557 (SSHVQEEQLD…KKKKKKKKKK (120 aa)). A disordered region spans residues 452 to 557 (IESSRAEEAK…KKKKKKKKKK (106 aa)). Basic and acidic residues predominate over residues 453–464 (ESSRAEEAKAEA). Positions 465 to 538 (PEEEEEEAGE…GEGEEEEEGK (74 aa)) are enriched in acidic residues. The span at 539–548 (GEEPAEEESK) shows a compositional bias: basic and acidic residues.

Belongs to the intermediate filament family. Forms homodimers (in vitro).

It localises to the cell projection. The protein resides in the axon. It is found in the cytoplasm. The protein localises to the cytoskeleton. Neurofilaments usually contain three intermediate filament proteins: NEFL, NEFM, and NEFH which are involved in the maintenance of neuronal caliber. May additionally cooperate with other neuronal intermediate filament proteins to form neuronal filamentous networks. The chain is Neurofilament light polypeptide (nefl) from Xenopus tropicalis (Western clawed frog).